The following is a 640-amino-acid chain: Dextranase (640 aa).

An N-terminal signal peptide occupies residues 1-32; it reads MPGTGLGRLAKRMTAAAAVFFISTSAVLPAQA. The propeptide occupies 33-49; that stretch reads ATAPAAAPPGVPAALKA. The disordered stretch occupies residues 248-269; the sequence is EQKERLVPTEESGSIHYPEPGE.

It belongs to the glycosyl hydrolase 49 family.

The protein resides in the secreted. It catalyses the reaction Endohydrolysis of (1-&gt;6)-alpha-D-glucosidic linkages in dextran.. In terms of biological role, efficiently decomposes water-insoluble glucan as well as dextran. This Arthrobacter sp. (strain CB-8) protein is Dextranase.